Here is a 99-residue protein sequence, read N- to C-terminus: MKIIKVTVVYALPKIQYICQVDIALGSTVKDAILKSNLLNLTNDVSFHHNRIGIYNKTVHLKFKIKDGDRIEIYRNLTIDPKEWRRNNVFLSKKLKKIY.

Belongs to the UPF0125 (RnfH) family.

The chain is UPF0125 protein BU253 from Buchnera aphidicola subsp. Acyrthosiphon pisum (strain APS) (Acyrthosiphon pisum symbiotic bacterium).